A 308-amino-acid chain; its full sequence is MLSTVSVFFMSIFVLLCFLGILANGFIVLMLSREWLWRGRLLPSDMILLSLGTSRFCQQCVGLVNSFYYSLHLVEYSRSLARQLISLHMDFLNSATFWFGTWLSVLFCIKIANFSHPAFLWLKWRFPALVPWLLLGSILVSFIVTLMFFWGNHTVYQAFLRRKFSGNTTFKEWNRRLEIDYFMPLKLVTTSIPCSLFLVSILLLINSLRRHSQRMQHNAHSLQDPNTQAHSRALKSLISFLVLYALSYVSMVIDATVVISSDNVWYWPWQIILYLCMSVHPFILITNNLKFRGTFRQLLLLARGFWVT.

Residues 1–6 lie on the Extracellular side of the membrane; the sequence is MLSTVS. A helical membrane pass occupies residues 7 to 27; sequence VFFMSIFVLLCFLGILANGFI. The Cytoplasmic portion of the chain corresponds to 28–60; sequence VLMLSREWLWRGRLLPSDMILLSLGTSRFCQQC. The helical transmembrane segment at 61–81 threads the bilayer; the sequence is VGLVNSFYYSLHLVEYSRSLA. Residues 82–90 lie on the Extracellular side of the membrane; that stretch reads RQLISLHMD. A helical membrane pass occupies residues 91-111; that stretch reads FLNSATFWFGTWLSVLFCIKI. Residues 112-128 lie on the Cytoplasmic side of the membrane; it reads ANFSHPAFLWLKWRFPA. A helical transmembrane segment spans residues 129–149; that stretch reads LVPWLLLGSILVSFIVTLMFF. The Extracellular portion of the chain corresponds to 150–184; that stretch reads WGNHTVYQAFLRRKFSGNTTFKEWNRRLEIDYFMP. Asparagine 152 and asparagine 167 each carry an N-linked (GlcNAc...) asparagine glycan. A helical transmembrane segment spans residues 185–205; the sequence is LKLVTTSIPCSLFLVSILLLI. Residues 206–239 lie on the Cytoplasmic side of the membrane; sequence NSLRRHSQRMQHNAHSLQDPNTQAHSRALKSLIS. The chain crosses the membrane as a helical span at residues 240–260; it reads FLVLYALSYVSMVIDATVVIS. The Extracellular portion of the chain corresponds to 261–264; that stretch reads SDNV. A helical membrane pass occupies residues 265-285; it reads WYWPWQIILYLCMSVHPFILI. Over 286–308 the chain is Cytoplasmic; that stretch reads TNNLKFRGTFRQLLLLARGFWVT.

It belongs to the G-protein coupled receptor T2R family. As to expression, expressed in subsets of taste receptor cells of the tongue and palate epithelium and exclusively in gustducin-positive cells. Expressed in 15% taste bud cells in circumvallate and foliate papillae but only in 2% in fungiform papillae. Expressed in the duodenum, antrum and fundus (part of the stomach).

It localises to the membrane. Receptor that may play a role in the perception of bitterness and is gustducin-linked. May play a role in sensing the chemical composition of the gastrointestinal content. The activity of this receptor may stimulate alpha gustducin, mediate PLC-beta-2 activation and lead to the gating of TRPM5. The protein is Taste receptor type 2 member 41 (Tas2r41) of Rattus norvegicus (Rat).